The sequence spans 340 residues: DNA-directed RNA polymerase subunit alpha (340 aa).

An alpha N-terminal domain (alpha-NTD) region spans residues 1 to 236; sequence MLSLSKNWNT…EQLQLFISFE (236 aa). Positions 251-340 are alpha C-terminal domain (alpha-CTD); that stretch reads FAPYLLKRVD…LSKRYEDSYN (90 aa).

It belongs to the RNA polymerase alpha chain family. In terms of assembly, homodimer. The RNAP catalytic core consists of 2 alpha, 1 beta, 1 beta' and 1 omega subunit. When a sigma factor is associated with the core the holoenzyme is formed, which can initiate transcription.

It carries out the reaction RNA(n) + a ribonucleoside 5'-triphosphate = RNA(n+1) + diphosphate. In terms of biological role, DNA-dependent RNA polymerase catalyzes the transcription of DNA into RNA using the four ribonucleoside triphosphates as substrates. This is DNA-directed RNA polymerase subunit alpha from Rickettsia peacockii (strain Rustic).